Consider the following 182-residue polypeptide: Carbonic anhydrase (182 aa).

Residues His64, His81, and His86 each contribute to the Mg(2+) site.

Belongs to the gamma-class carbonic anhydrase family. As to quaternary structure, homotrimer. It depends on Mg(2+) as a cofactor. Requires Zn(2+) as cofactor.

It carries out the reaction hydrogencarbonate + H(+) = CO2 + H2O. Reversible hydration of carbon dioxide. The polypeptide is Carbonic anhydrase (Geobacillus kaustophilus (strain HTA426)).